The following is a 331-amino-acid chain: UPF0194 membrane protein YbhG (331 aa).

A signal peptide spans 1–19 (MKKPVVIGLVIAAIVAVIA). Residues 140–209 (RTISANDLEN…DLQDTTLIAP (70 aa)) are a coiled coil.

Belongs to the UPF0194 family.

It localises to the periplasm. The sequence is that of UPF0194 membrane protein YbhG (ybhG) from Salmonella typhi.